Reading from the N-terminus, the 40-residue chain is Dolichyl-diphosphooligosaccharide--protein glycosyltransferase subunit 4 (40 aa).

Over 1 to 7 the chain is Lumenal; it reads MITDMQL. Residues 8–28 traverse the membrane as a helical segment; it reads AIFSNVLGVFLFLLVVAYHYI. At 29–40 the chain is on the cytoplasmic side; sequence NANTGKPSAKAK.

This sequence belongs to the OST4 family. As to quaternary structure, component of the oligosaccharyltransferase (OST) complex.

The protein resides in the endoplasmic reticulum membrane. Functionally, subunit of the oligosaccharyl transferase (OST) complex that catalyzes the initial transfer of a defined glycan (Glc(3)Man(9)GlcNAc(2) in eukaryotes) from the lipid carrier dolichol-pyrophosphate to an asparagine residue within an Asn-X-Ser/Thr consensus motif in nascent polypeptide chains, the first step in protein N-glycosylation. N-glycosylation occurs cotranslationally and the complex associates with the Sec61 complex at the channel-forming translocon complex that mediates protein translocation across the endoplasmic reticulum (ER). All subunits are required for a maximal enzyme activity. The protein is Dolichyl-diphosphooligosaccharide--protein glycosyltransferase subunit 4 of Drosophila sechellia (Fruit fly).